The primary structure comprises 101 residues: Small ribosomal subunit protein uS10 (101 aa).

The protein belongs to the universal ribosomal protein uS10 family. Part of the 30S ribosomal subunit.

In terms of biological role, involved in the binding of tRNA to the ribosomes. This is Small ribosomal subunit protein uS10 from Bacteroides fragilis (strain ATCC 25285 / DSM 2151 / CCUG 4856 / JCM 11019 / LMG 10263 / NCTC 9343 / Onslow / VPI 2553 / EN-2).